Reading from the N-terminus, the 249-residue chain is Ribonuclease HII (249 aa).

One can recognise an RNase H type-2 domain in the interval 30-221; it reads GPVAGVDEVG…VRRLVMDGEP (192 aa). A divalent metal cation contacts are provided by Asp36, Glu37, and Asp130.

It belongs to the RNase HII family. Requires Mn(2+) as cofactor. The cofactor is Mg(2+).

It is found in the cytoplasm. It catalyses the reaction Endonucleolytic cleavage to 5'-phosphomonoester.. Endonuclease that specifically degrades the RNA of RNA-DNA hybrids. The polypeptide is Ribonuclease HII (Mycolicibacterium vanbaalenii (strain DSM 7251 / JCM 13017 / BCRC 16820 / KCTC 9966 / NRRL B-24157 / PYR-1) (Mycobacterium vanbaalenii)).